Here is a 567-residue protein sequence, read N- to C-terminus: MIGLGSYGYTAPSSKKINAYDVPQGVDIRGRFDEEFAKILTKDALQFVADLQREFRNHIKYAMECRKEAKRRYNEGALPGFDPATRYIREGKWTCVPFPPAVADRRVEITGPVERKMIINALNSGAKVFMADFEDALSPSWENLMRGQINLKDAVEGTITFNDKARNRVYKLNNEIAKLFVRPRGWHLPEAHIFIDGEPATGCLVDFGLYFYHNYATFRNTQGQGFGPFFYLPKMENSREAKIWNSVFEKAEKMAGIEKGSIRATVLIETLPAVFQMDEIFYELRDHSVGLNCGRWDYIFSYVKTFQGHPDRLLPDRGQVGMTQHFMRSYSDLLIRTCHRRGVHAMGGMAAQIPIRDDPTANEAAFELVRKDKQREVKAGHDGTWAAHPGLIKTCMEVFTNNMGNTPNQIETVKRDYASNLTEDDLLQRPRGVRTMEGLRLNTRVGIQYLAAWLTGSGSVPLYNLMEDAATAEISRVQIWQWLKYGVELDGDGLGVRVNHVFGRVVEEEMARIEREVGKEKFKKGMYKEACKIFTRQCTASTLDDFLTLDAYNYIVIHHPKDVSSKL.

The active-site Proton acceptor is the arginine 182. The active-site Proton donor is the aspartate 468. Residues 565-567 (SKL) carry the Microbody targeting signal motif.

This sequence belongs to the malate synthase family.

Its subcellular location is the glyoxysome. It catalyses the reaction glyoxylate + acetyl-CoA + H2O = (S)-malate + CoA + H(+). It participates in carbohydrate metabolism; glyoxylate cycle; (S)-malate from isocitrate: step 2/2. The chain is Malate synthase, glyoxysomal from Gossypium hirsutum (Upland cotton).